A 260-amino-acid polypeptide reads, in one-letter code: tRNA pseudouridine synthase C (260 aa).

Aspartate 54 is a catalytic residue.

It belongs to the pseudouridine synthase RluA family.

It carries out the reaction uridine(65) in tRNA = pseudouridine(65) in tRNA. In terms of biological role, responsible for synthesis of pseudouridine from uracil-65 in transfer RNAs. This chain is tRNA pseudouridine synthase C (truC), found in Escherichia coli O6:H1 (strain CFT073 / ATCC 700928 / UPEC).